The chain runs to 1089 residues: Translocase of chloroplast 120, chloroplastic (1089 aa).

Residue Gly-2 is modified to N-acetylglycine. 3 disordered regions span residues 158 to 179, 255 to 339, and 353 to 381; these read ATEDVNLENGNTHSSSENGVVS, TLSP…GLGR, and QPRVNGNVSHNQPQQAEDSTTAETDEHDE. Residues 165–176 are compositionally biased toward polar residues; that stretch reads ENGNTHSSSENG. Residues Ser-179, Ser-263, and Ser-283 each carry the phosphoserine modification. The span at 300-312 shows a compositional bias: basic and acidic residues; sequence EIKESQHMERESE. Over residues 327–339 the composition is skewed to low complexity; the sequence is AALPPARPAGLGR. Polar residues predominate over residues 353–374; that stretch reads QPRVNGNVSHNQPQQAEDSTTA. Residues 454–683 enclose the AIG1-type G domain; that stretch reads DFSCTIMVLG…KLQDNIPGGQ (230 aa). Residues 463-470 form a G1 region; that stretch reads GKSGVGKS. Residues 466-471 and 485-490 each bind GTP; these read GVGKSA and DAFQVG. Ser-470 contributes to the Mg(2+) binding site. Residues 485 to 488 are homodimerization; that stretch reads DAFQ. Positions 489-493 are G2; it reads VGTKK. Residues 510–513 form a G3 region; the sequence is DTPG. Residues 548-553 are homodimerization; the sequence is RLDMQS. A G4 region spans residues 582–585; sequence THAA. GTP is bound by residues His-583 and 631-632; that span reads EN. A G5 region spans residues 631-633; sequence ENH. The disordered stretch occupies residues 710–748; the sequence is PEQQYDDEDDEDDLDESSDSEEESEYDELPPFKRLTKAE. The segment covering 713 to 737 has biased composition (acidic residues); it reads QYDDEDDEDDLDESSDSEEESEYDE. Residues 767-788 adopt a coiled-coil conformation; sequence REKLFMKRQMKEERKRRKLLKK. Residues 1064 to 1080 traverse the membrane as a helical segment; sequence LAVVALVPLFKKLLTYY.

This sequence belongs to the TRAFAC class TrmE-Era-EngA-EngB-Septin-like GTPase superfamily. AIG1/Toc34/Toc159-like paraseptin GTPase family. TOC159 subfamily. Homodimer. Part of the TOC core complex that includes 1 protein for the specific recognition of transit peptides surrounded by a ring composed of four proteins forming translocation channels, and four to five GTP-binding proteins providing energy. This core complex can interact with components of the TIC complex to form a larger import complex. Chloroplastic protein precursor such as prSS (precursor of the RuBisCO small subunit) interacts with these complexes. The TOC complex contains a specific subset of polar lipids such as digalactosyldiacylglyceride (DGDG), phosphatidylcholine (PC) and phosphatidylglycerol (PG). The cofactor is Mg(2+). Phosphorylated by KOC1. As to expression, expressed in seedlings, flowers, and roots.

The protein localises to the plastid. It localises to the chloroplast outer membrane. It is found in the cytoplasm. Functionally, GTPase involved in protein precursor import into chloroplasts. Seems to recognize chloroplast-destined precursor proteins and regulate their presentation to the translocation channel through GTP hydrolysis. Probably specialized in the import of nuclear encoded non-photosynthetic preproteins from the cytoplasm to the chloroplast. The chain is Translocase of chloroplast 120, chloroplastic from Arabidopsis thaliana (Mouse-ear cress).